Reading from the N-terminus, the 1307-residue chain is MSVTPVILEAYCAVSDEVAKQVKKYLLGDFAEESKFERKNSESSDGSETQFCRATEKKENVEVWDDWGDKEEGAAENSLESDESIRNWLFRCDLKTYSDAEYLLVTWESRFVVLRKPPDEPVYKIVCKQYIEGDPISNEITASSIFGLSNVRHIELLDSIIIALGTLDGHVYFFTEQGTMLYFDRFSIFEPVNSLQFEVVKTGQTFIVVFTKGFFMINPISLKSVLYQAKVLIAKCEKTVKQISESIELQSELLAPDIKGNIIHVIFTGLHKPSTLEQYISASYDSFYAKVEKPSLPLYSTFMVTTEKEFAVFVWHDREEQDKLIDDVIKYGKSLVPSFGIRKFFGISTEPARIASHMRSAVHAPTRSIIMETRVAQNVSRSPDCQYVAVTDRMARVLVIDIASRQVVLIFKGYRDASISWVSVTEDDRVAQFLTIFAPRRSLLEVWTVLGNVRVCAQHVPSSECNVVTGGENKMLCGRCHVHTDSNSFFIDEKGEFHRIALPFHLALTSRSRQDQHDHLLLKQLENTKTGGEDWFQTFSDLKMATSRKTTFQNALHNLSTAEEAHQFIARIRSIPTSASLGDLPNSAEKSIGFYARTVAETKPPVGEYDDKDTSNYKLDSIVERILECHMQKFGERTDMLNDSEVMKVGEWLKYVDLSQEDIDVFSEHWSEKQRHCLANLIFGPLFGSFEIDEYYDTVLEKIPVKRKNIVKLFYMRFEKTTTHIDWRIFNRIVEMFLNLEKSETGILEQVDQMAMDSKDVPLGMILLSICWCARIQIRILKGNDEDEVENDHDLEEEDEKNKTIDEWDAISPEAEHLDCIIMCLHCVSLAQSLLKDDSNILRISDVVPRIDSYIRENVAKWIVSTPIDTDTIEKLFPRDPSENLAEKGNEEDRRKQMIIDFPDDKEVVIQRMYQIIPRVFEHDLVVADVCWEMMSQWFREKDDNFSYIKDCTTLLPQSIVDPRLRHGIARLIWDKFIFMVFQSIVNMVEKTGRRPKDKETRKEIGFGEVKLEEFLMECEKFLEVLMDSVRDMPPPIDFKQDLLVEMASSSFAAHLHQSKTAYRQDQFAILASRQPLVNFHLVLHHQHLALALRLQLTTGLRFHPLRNLFCVTGNRAFFASLDSHPLIPLDRVDDATMEKRHAFLVKVAEQGSMEERRLARHLEMEWKLTVNEISFMQALSSFRLGNDHQGSLELASCVRDDRSAVALARVLAARLIQLANEANKRYSTAHSQYLCALAGEEAARVELYENSPDDPLVDSNPKTWKDAVTSLGRAGNSVPQSAQAAIPFVRMNDIAKLYFGAQWVNN.

The protein belongs to the Rab3-GAP regulatory subunit family. The Rab3 GTPase-activating complex is a heterodimer composed of rbg-1 and rbg-2.

The protein resides in the cytoplasm. Functionally, probable regulatory subunit of a GTPase activating protein that has specificity for Rab3 subfamily. Rab3 proteins are involved in regulated exocytosis of neurotransmitters and hormones. Rab3 GTPase-activating complex specifically converts active Rab3-GTP to the inactive form Rab3-GDP. The chain is Rab3 GTPase-activating protein regulatory subunit (rbg-2) from Caenorhabditis elegans.